The sequence spans 142 residues: Large ribosomal subunit protein uL16 (142 aa).

This sequence belongs to the universal ribosomal protein uL16 family. Part of the 50S ribosomal subunit.

In terms of biological role, binds 23S rRNA and is also seen to make contacts with the A and possibly P site tRNAs. The sequence is that of Large ribosomal subunit protein uL16 from Aquifex aeolicus (strain VF5).